The following is a 329-amino-acid chain: 2-oxoglutarate-dependent dioxygenase mpl2 (329 aa).

In terms of domain architecture, Fe2OG dioxygenase spans 183–288 (PACPLRLLHY…RYSVVFFFDG (106 aa)). The Fe cation site is built by His-211, Asp-213, and His-269. Residue Arg-279 participates in 2-oxoglutarate binding.

The protein belongs to the iron/ascorbate-dependent oxidoreductase family. It depends on Fe(2+) as a cofactor.

Its pathway is mycotoxin biosynthesis. Its function is as follows. 2-oxoglutarate-dependent dioxygenase; part of the gene cluster that mediates the biosynthesis of the mycotoxin citrinin, a hepato-nephrotoxic compound to humans due to inhibition of respiration complex III. The pathway begins with the synthesis of a keto-aldehyde intermediate by the citrinin PKS (pksCT) from successive condensations of 4 malonyl-CoA units, presumably with a simple acetyl-CoA starter unit. Release of the keto-aldehyde intermediate is consistent with the presence of the C-terminal reductive release domain. Mp11 collaborates with pksCT by catalyzing the hydrolysis of ACP-bound acyl intermediates to free the ACP from stalled intermediates. Mpl2 then catalyzes the oxidation of the C-12 methyl of the ketone intermediate to an alcohol intermediate which is further oxidized by the oxidoreductase mpl7 to produce a bisaldehyde intermediate. The fourth catalytic step is catalyzed by the mpl4 aldehyde dehydrogenase. The final transformation is the reduction of C-3 by mpl6 to provide the chemically stable citrinin nucleus. In Monascus purpureus (Red mold), this protein is 2-oxoglutarate-dependent dioxygenase mpl2.